Consider the following 524-residue polypeptide: MNRSQILTDRQQQELNKAILQYLEPMLTESSSDQEVYRSLQQILVPPSSSSSEAIVDNYLEKKWSTVLRLQRKIIDLENEVGTLRSIVDGQQSVSNGAASVISKDRINWLPNRASKSFPTQQNQLVMASVIHPVLPVIFGGCSDGSIIVWNIVNDDTSIPEKIIRAHTRSINKLAFSVEPADLSKDLTKSKTYIFASCSADLSIKIWDSSSYRHIRTLTGHDHTVSSVAFSQSNPDHLYSVSRDKTVKIWDLVNGYCVKSFTGHSEWVRDIDVASVNSQLSLNNMKVSAELGDFVVTCSNDQSVRVSHAESGAGLALLIGHTHVIEKVKFLPAVSNTILDKFLKENHAQFPSIPQELVSDEIFTTTLGYKYCISGGRDNLLKLWLIPPPTLIPHRSPLPAQHNNSQGWAIADLVGHQSWVKAIAIHPNGRFIFSGSDDKTIKVWDLANLNVTGSVKCVRTLSGHDGFINDLDFAAFNRDSGKEDKIKEDATEEESHQQLMKFIEGRMRCLFISGAADNSIKLWS.

Positions 65–90 (STVLRLQRKIIDLENEVGTLRSIVDG) form a coiled coil. 8 WD repeats span residues 121–160 (QQNQ…TSIP), 166–217 (AHTR…HIRT), 220–262 (GHDH…KSFT), 277–317 (NSQL…GLAL), 353–394 (IPQE…LIPH), 415–454 (GHQS…VTGS), 463–492 (GHDG…DATE), and 493–524 (EESH…KLWS).

The protein belongs to the WD repeat LIS1/nudF family. In terms of assembly, self-associates. Interacts with NDL1 and dynein.

It is found in the cytoplasm. Its subcellular location is the cytoskeleton. The protein localises to the spindle pole. Functionally, positively regulates the activity of the minus-end directed microtubule motor protein dynein. Plays a central role in positioning the mitotic spindle at the bud neck during cell division. Targets cytoplasmic dynein to microtubule plus ends, thereby promoting dynein-mediated microtubule sliding along the bud cortex and consequently the movement of the mitotic spindle to the bud neck. The chain is Nuclear distribution protein PAC1 from Scheffersomyces stipitis (strain ATCC 58785 / CBS 6054 / NBRC 10063 / NRRL Y-11545) (Yeast).